The primary structure comprises 296 residues: Glycine--tRNA ligase alpha subunit (296 aa).

The protein belongs to the class-II aminoacyl-tRNA synthetase family. In terms of assembly, tetramer of two alpha and two beta subunits.

The protein resides in the cytoplasm. It catalyses the reaction tRNA(Gly) + glycine + ATP = glycyl-tRNA(Gly) + AMP + diphosphate. This Francisella tularensis subsp. holarctica (strain FTNF002-00 / FTA) protein is Glycine--tRNA ligase alpha subunit.